Here is a 193-residue protein sequence, read N- to C-terminus: MNLNDITFLLSVHGLDQLPEDGLPEFAFAGRSNVGKSSLMNTLLRRSGFVKVSGRPGKTQGLNFFQAAEDCMLVDLPGYGFARVSKEMQNNWQKLITSYISEREALKCVVVIIDIRHEPKALDRQLLDWLREQKVPVLPIYTKIDKLSGNQLSRHAAILDAGHGIKKDERILFSSKTGQGRDELIAVLESYLA.

The 172-residue stretch at 22–193 folds into the EngB-type G domain; it reads GLPEFAFAGR…LIAVLESYLA (172 aa). GTP-binding positions include 30 to 37, 57 to 61, 75 to 78, 142 to 145, and 173 to 175; these read GRSNVGKS, GKTQG, DLPG, TKID, and FSS. Mg(2+)-binding residues include serine 37 and threonine 59.

Belongs to the TRAFAC class TrmE-Era-EngA-EngB-Septin-like GTPase superfamily. EngB GTPase family. It depends on Mg(2+) as a cofactor.

Functionally, necessary for normal cell division and for the maintenance of normal septation. This Desulfotalea psychrophila (strain LSv54 / DSM 12343) protein is Probable GTP-binding protein EngB.